The sequence spans 289 residues: Phosphatidylserine decarboxylase proenzyme (289 aa).

Residues Asp-89, His-146, and Ser-252 each act as charge relay system; for autoendoproteolytic cleavage activity in the active site. The Schiff-base intermediate with substrate; via pyruvic acid; for decarboxylase activity role is filled by Ser-252. Ser-252 carries the post-translational modification Pyruvic acid (Ser); by autocatalysis.

This sequence belongs to the phosphatidylserine decarboxylase family. PSD-B subfamily. Prokaryotic type I sub-subfamily. Heterodimer of a large membrane-associated beta subunit and a small pyruvoyl-containing alpha subunit. The cofactor is pyruvate. Is synthesized initially as an inactive proenzyme. Formation of the active enzyme involves a self-maturation process in which the active site pyruvoyl group is generated from an internal serine residue via an autocatalytic post-translational modification. Two non-identical subunits are generated from the proenzyme in this reaction, and the pyruvate is formed at the N-terminus of the alpha chain, which is derived from the carboxyl end of the proenzyme. The autoendoproteolytic cleavage occurs by a canonical serine protease mechanism, in which the side chain hydroxyl group of the serine supplies its oxygen atom to form the C-terminus of the beta chain, while the remainder of the serine residue undergoes an oxidative deamination to produce ammonia and the pyruvoyl prosthetic group on the alpha chain. During this reaction, the Ser that is part of the protease active site of the proenzyme becomes the pyruvoyl prosthetic group, which constitutes an essential element of the active site of the mature decarboxylase.

It localises to the cell membrane. The catalysed reaction is a 1,2-diacyl-sn-glycero-3-phospho-L-serine + H(+) = a 1,2-diacyl-sn-glycero-3-phosphoethanolamine + CO2. It functions in the pathway phospholipid metabolism; phosphatidylethanolamine biosynthesis; phosphatidylethanolamine from CDP-diacylglycerol: step 2/2. Catalyzes the formation of phosphatidylethanolamine (PtdEtn) from phosphatidylserine (PtdSer). The sequence is that of Phosphatidylserine decarboxylase proenzyme from Shewanella sp. (strain W3-18-1).